The chain runs to 89 residues: Neurotoxin beta-KTx 52.1 (89 aa).

An N-terminal signal peptide occupies residues 1–20 (MKQYIFFLALIVLTATFAEA). Residues 21–39 (GKKTEILDKVKKVFSKAKD) constitute a propeptide that is removed on maturation. One can recognise a BetaSPN-type CS-alpha/beta domain in the interval 53–89 (ELGCPFIDKWCEDHCDSKKLVGKCENFDCSCVKLGGK). Disulfide bonds link Cys-56/Cys-76, Cys-63/Cys-81, and Cys-67/Cys-83.

This sequence belongs to the long chain scorpion toxin family. Class 2 subfamily. Expressed by the venom gland.

The protein resides in the secreted. In terms of biological role, inhibits voltage-gated potassium channel. The chain is Neurotoxin beta-KTx 52.1 from Lychas mucronatus (Chinese swimming scorpion).